A 268-amino-acid polypeptide reads, in one-letter code: Undecaprenyl-diphosphatase (268 aa).

The next 8 helical transmembrane spans lie at 4–24 (STTL…FIPV), 50–70 (IQLG…ISVI), 84–104 (AAVL…HGFI), 109–129 (FETP…LLFV), 144–164 (VPLG…VPGV), 184–204 (AAEF…AFDL), 214–234 (GALG…VLVV), and 245–265 (GYSL…AALL).

It belongs to the UppP family.

It is found in the cell inner membrane. It catalyses the reaction di-trans,octa-cis-undecaprenyl diphosphate + H2O = di-trans,octa-cis-undecaprenyl phosphate + phosphate + H(+). In terms of biological role, catalyzes the dephosphorylation of undecaprenyl diphosphate (UPP). Confers resistance to bacitracin. This Cereibacter sphaeroides (strain ATCC 17025 / ATH 2.4.3) (Rhodobacter sphaeroides) protein is Undecaprenyl-diphosphatase.